Reading from the N-terminus, the 361-residue chain is UDP-3-O-acylglucosamine N-acyltransferase (361 aa).

H264 serves as the catalytic Proton acceptor.

This sequence belongs to the transferase hexapeptide repeat family. LpxD subfamily. In terms of assembly, homotrimer.

The catalysed reaction is a UDP-3-O-[(3R)-3-hydroxyacyl]-alpha-D-glucosamine + a (3R)-hydroxyacyl-[ACP] = a UDP-2-N,3-O-bis[(3R)-3-hydroxyacyl]-alpha-D-glucosamine + holo-[ACP] + H(+). Its pathway is bacterial outer membrane biogenesis; LPS lipid A biosynthesis. Its function is as follows. Catalyzes the N-acylation of UDP-3-O-acylglucosamine using 3-hydroxyacyl-ACP as the acyl donor. Is involved in the biosynthesis of lipid A, a phosphorylated glycolipid that anchors the lipopolysaccharide to the outer membrane of the cell. The protein is UDP-3-O-acylglucosamine N-acyltransferase of Bordetella avium (strain 197N).